We begin with the raw amino-acid sequence, 236 residues long: Biosynthetic peptidoglycan transglycosylase (236 aa).

Residues 20 to 40 (GLVVAAVLALIPTMLTFLYLP) form a helical membrane-spanning segment.

Belongs to the glycosyltransferase 51 family.

Its subcellular location is the cell inner membrane. The catalysed reaction is [GlcNAc-(1-&gt;4)-Mur2Ac(oyl-L-Ala-gamma-D-Glu-L-Lys-D-Ala-D-Ala)](n)-di-trans,octa-cis-undecaprenyl diphosphate + beta-D-GlcNAc-(1-&gt;4)-Mur2Ac(oyl-L-Ala-gamma-D-Glu-L-Lys-D-Ala-D-Ala)-di-trans,octa-cis-undecaprenyl diphosphate = [GlcNAc-(1-&gt;4)-Mur2Ac(oyl-L-Ala-gamma-D-Glu-L-Lys-D-Ala-D-Ala)](n+1)-di-trans,octa-cis-undecaprenyl diphosphate + di-trans,octa-cis-undecaprenyl diphosphate + H(+). Its pathway is cell wall biogenesis; peptidoglycan biosynthesis. Peptidoglycan polymerase that catalyzes glycan chain elongation from lipid-linked precursors. This Mesorhizobium japonicum (strain LMG 29417 / CECT 9101 / MAFF 303099) (Mesorhizobium loti (strain MAFF 303099)) protein is Biosynthetic peptidoglycan transglycosylase.